The sequence spans 282 residues: 4-diphosphocytidyl-2-C-methyl-D-erythritol kinase (282 aa).

Residue K9 is part of the active site. 98–108 (PMGGGLGGGSS) lines the ATP pocket. D140 is an active-site residue.

This sequence belongs to the GHMP kinase family. IspE subfamily. As to quaternary structure, homodimer.

The catalysed reaction is 4-CDP-2-C-methyl-D-erythritol + ATP = 4-CDP-2-C-methyl-D-erythritol 2-phosphate + ADP + H(+). Its pathway is isoprenoid biosynthesis; isopentenyl diphosphate biosynthesis via DXP pathway; isopentenyl diphosphate from 1-deoxy-D-xylulose 5-phosphate: step 3/6. In terms of biological role, catalyzes the phosphorylation of the position 2 hydroxy group of 4-diphosphocytidyl-2C-methyl-D-erythritol. This is 4-diphosphocytidyl-2-C-methyl-D-erythritol kinase from Klebsiella pneumoniae (strain 342).